The primary structure comprises 1104 residues: Nitrite reductase [NAD(P)H] (1104 aa).

Residue 44 to 79 (QKIVVVGLGMVAVAFIEKLVKLDSERRKYDIVVIGE) coordinates FAD. 146-176 (YDILVLATGSDAVLPTSTPGHDAKGIFVYRT) provides a ligand contact to NAD(+). The tract at residues 396–419 (KFLPGQRPSAESIGAADPNREEEP) is disordered. 4 residues coordinate [2Fe-2S] cluster: cysteine 500, cysteine 502, cysteine 535, and cysteine 538. Residues cysteine 720, cysteine 726, cysteine 760, and cysteine 764 each coordinate [4Fe-4S] cluster. Cysteine 764 provides a ligand contact to siroheme. A Rieske domain is found at 932-1040 (WQPVIKADYF…VEEREDGWIY (109 aa)). Cysteine 976, histidine 978, cysteine 1001, and histidine 1004 together coordinate [2Fe-2S] cluster. The interval 1081-1104 (GKRAGAKGIEGSKPTRSPSNTIDW) is disordered. The segment covering 1094 to 1104 (PTRSPSNTIDW) has biased composition (polar residues).

This sequence belongs to the nitrite and sulfite reductase 4Fe-4S domain family. As to quaternary structure, homodimer. It depends on siroheme as a cofactor. [4Fe-4S] cluster serves as cofactor. FAD is required as a cofactor. Requires [2Fe-2S] cluster as cofactor.

It carries out the reaction NH4(+) + 3 NADP(+) + 2 H2O = nitrite + 3 NADPH + 5 H(+). It catalyses the reaction NH4(+) + 3 NAD(+) + 2 H2O = nitrite + 3 NADH + 5 H(+). It functions in the pathway nitrogen metabolism; nitrate reduction (assimilation). The protein is Nitrite reductase [NAD(P)H] (niiA) of Emericella nidulans (strain FGSC A4 / ATCC 38163 / CBS 112.46 / NRRL 194 / M139) (Aspergillus nidulans).